The primary structure comprises 121 residues: Type II secretion system protein I (121 aa).

Positions 1 to 6 (MNKQKG) are cleaved as a propeptide — leader sequence. Residue Met-7 is modified to N-methylmethionine. Residues 7–27 (MTLLEVLVALAIFSLAGLTLL) traverse the membrane as a helical segment.

The protein belongs to the GSP I family. Type II secretion is composed of four main components: the outer membrane complex, the inner membrane complex, the cytoplasmic secretion ATPase and the periplasm-spanning pseudopilus. Interacts with core component PulG. Interacts with pseudopilins PulJ and PulK. In terms of processing, cleaved by prepilin peptidase. Methylated by prepilin peptidase at the amino group of the N-terminal methionine once the leader sequence is cleaved by prepilin peptidase.

The protein resides in the cell inner membrane. Functionally, component of the type II secretion system required for the energy-dependent secretion of extracellular factors such as proteases and toxins from the periplasm. Part of the pseudopilus tip complex that is critical for the recognition and binding of secretion substrates. The sequence is that of Type II secretion system protein I (pulI) from Klebsiella michiganensis (strain ATCC 8724 / DSM 4798 / JCM 20051 / NBRC 3318 / NRRL B-199 / KCTC 1686 / BUCSAV 143 / CCM 1901).